Consider the following 300-residue polypeptide: Putative glycosyltransferase ORF300 (300 aa).

Belongs to the glycosyltransferase group 1 family. Glycosyltransferase 4 subfamily.

The protein is Putative glycosyltransferase ORF300 of Acidianus hospitalis (AFV-1).